The sequence spans 341 residues: MNSGMGIILTIAAQGLLVIAFVMISLLFLVYGDRKIWAAVQLRRGPNVVGAFGLLQTVADAAKYIFKEVVVPAGVDRPVFFLAPLISFVLAVLAWAVIPFSPGWVLSDINVAILFVFAASSLEVYGVIMGGWASNSKYPFLGSLRSAAQMISYEVSLGLIIIGIIISTGSMNLSHIVEAQDGAFGLFNWYWLPHLPMVALFFISALAETNRPPFDLPEAESELVAGFQVEYSSTPFLLFMAGEYIAIFLMCALMSLLFFGGWLSPIPGLPDGVFWMVAKMAFFFFLFAMVKAIVPRYRYDQLMRIGWKVFLPFSLGWVVLVAFLAKFEVFGGFWARWAMGG.

The next 9 membrane-spanning stretches (helical) occupy residues 7–27, 46–66, 80–100, 111–131, 157–177, 183–203, 244–264, 273–293, and 305–325; these read IILT…ISLL, PNVV…KYIF, FFLA…VIPF, VAIL…IMGG, LGLI…SHIV, AFGL…LFFI, YIAI…GWLS, VFWM…VKAI, and IGWK…AFLA.

Belongs to the complex I subunit 1 family. As to quaternary structure, NDH-1 is composed of 14 different subunits. Subunits NuoA, H, J, K, L, M, N constitute the membrane sector of the complex.

It is found in the cell inner membrane. It carries out the reaction a quinone + NADH + 5 H(+)(in) = a quinol + NAD(+) + 4 H(+)(out). NDH-1 shuttles electrons from NADH, via FMN and iron-sulfur (Fe-S) centers, to quinones in the respiratory chain. The immediate electron acceptor for the enzyme in this species is believed to be ubiquinone. Couples the redox reaction to proton translocation (for every two electrons transferred, four hydrogen ions are translocated across the cytoplasmic membrane), and thus conserves the redox energy in a proton gradient. This subunit may bind ubiquinone. The protein is NADH-quinone oxidoreductase subunit H 1 of Cereibacter sphaeroides (strain ATCC 17029 / ATH 2.4.9) (Rhodobacter sphaeroides).